We begin with the raw amino-acid sequence, 80 residues long: U1-nemetoxin-Csp1a (80 aa).

The first 20 residues, 1–20 (MKYFVVFCVLIIAVAAFTSA), serve as a signal peptide directing secretion. Positions 21–41 (AEDGEVFEENPLEFPKTIQKR) are excised as a propeptide. Disulfide bonds link Cys-42–Cys-56, Cys-49–Cys-60, Cys-55–Cys-77, and Cys-66–Cys-73.

The protein belongs to the neurotoxin 13 (insecticidal toxin ABC) family. 02 (Calisoga) subfamily. Expressed by the venom gland.

It is found in the secreted. In terms of biological role, causes paralysis to insect larvae (H.virescens). This toxin is active only on insects. The protein is U1-nemetoxin-Csp1a of Calisoga sp. (Spider).